Here is a 260-residue protein sequence, read N- to C-terminus: 3-oxoadipate CoA-transferase subunit B (260 aa).

E51 is an active-site residue.

This sequence belongs to the 3-oxoacid CoA-transferase subunit B family. In terms of assembly, heterotetramer composed of 2 A and 2 B subunits.

It catalyses the reaction 3-oxoadipate + succinyl-CoA = 3-oxoadipyl-CoA + succinate. It participates in aromatic compound metabolism; beta-ketoadipate pathway; acetyl-CoA and succinyl-CoA from 3-oxoadipate: step 1/2. This Pseudomonas knackmussii (strain DSM 6978 / CCUG 54928 / LMG 23759 / B13) protein is 3-oxoadipate CoA-transferase subunit B (catJ).